The sequence spans 465 residues: MSSELMFNYTFSWPAGPKDVILTGTFDDWRGTLPLVKTAKGNFEITMPVKLANKDDTFQFKFIVDGVWCVSDSYKKEHVSEGIENNFLQITDLVETQEVAGASRIPEAGGLLCGKPPRSAGPPSTSNRKKNKRNNKKRRSKLKKKSTKNNKKSNESLDDNEEEDGVTGTTTEDVTGTSREETPLAEPTNVSKEAPGNFHILPIDQSADTTQSNGIIGGPGPVLVPNPGEIKEFTEIRDVDARELNERLNKKEEVPEPVAGPIVESSVTEKSPALPQADDPIVETKEVAHNVQELTPQVEAVTPLINEPEPLPTPEAQISIPESTKVEPVEGSLQSKLVEKRESTEGVLDGSKKVENKAKKDEEVFTLDPIVNKAPKLPLTDEQTAEGRKSPAVSEEKEKKKKQEKGSKEVKRSETSKEKKPSAKEVKKQTVKASKKQTASPLSSSTEEPKKKKTGFFGKLKKLFK.

2 disordered regions span residues 107-227 (EAGG…VPNP) and 247-276 (RLNK…ALPQ). Over residues 127 to 151 (NRKKNKRNNKKRRSKLKKKSTKNNK) the composition is skewed to basic residues. 2 positions are modified to phosphoserine: serine 153 and serine 156. Over residues 156–165 (SLDDNEEEDG) the composition is skewed to acidic residues. Residues 160 to 161 (NE) are X-DNA-binding. Low complexity predominate over residues 166–177 (VTGTTTEDVTGT). The residue at position 182 (threonine 182) is a Phosphothreonine. Serine 271 is modified (phosphoserine). Threonine 295 carries the post-translational modification Phosphothreonine. The interval 298–465 (VEAVTPLINE…FFGKLKKLFK (168 aa)) is disordered. A phosphoserine mark is found at serine 319 and serine 343. Residues 337–363 (LVEKRESTEGVLDGSKKVENKAKKDEE) show a composition bias toward basic and acidic residues. A Phosphothreonine modification is found at threonine 366. Basic and acidic residues-rich tracts occupy residues 385–398 (AEGR…EEKE) and 404–428 (EKGS…EVKK). Phosphoserine is present on serine 394. Residue serine 440 is modified to Phosphoserine. Positions 451–465 (KKKTGFFGKLKKLFK) are enriched in basic residues.

This sequence belongs to the CRP1/MDG1 family. Post-translationally, cleaved in the vicinity of position 160 to give an X-DNA-binding N-terminal subpeptide and a non-DNA-binding C-terminal subpeptide.

Functionally, cruciform DNA-binding protein which exerts an enhancing effect on the cleavage of cruciform DNA (X-DNA) by endonuclease VII from bacteriophage T4. This Saccharomyces cerevisiae (strain AWRI796) (Baker's yeast) protein is Cruciform DNA-recognizing protein 1 (CRP1).